Reading from the N-terminus, the 374-residue chain is Probable plastid-lipid-associated protein 3, chloroplastic (374 aa).

The N-terminal 46 residues, 1-46 (MAMPPPLFAAASHASLLLPSPTIHSSTGSRRPFRLPLRSSRRPPVA), are a transit peptide targeting the chloroplast. The tract at residues 19–148 (PSPTIHSSTG…EDNEEERREE (130 aa)) is disordered. Positions 28–54 (GSRRPFRLPLRSSRRPPVAAAAASGVP) are enriched in low complexity. 2 stretches are compositionally biased toward pro residues: residues 64 to 73 (APEPPSQPDP) and 127 to 136 (PAPPPPPPPV).

It belongs to the PAP/fibrillin family.

Its subcellular location is the plastid. The protein resides in the chloroplast. The chain is Probable plastid-lipid-associated protein 3, chloroplastic (PAP3) from Oryza sativa subsp. japonica (Rice).